A 271-amino-acid chain; its full sequence is Dehydrodolichyl diphosphate synthase 7 (271 aa).

The chain crosses the membrane as a helical span at residues F24 to I41.

Belongs to the UPP synthase family. Mg(2+) serves as cofactor.

The protein localises to the endoplasmic reticulum membrane. It participates in protein modification; protein glycosylation. In terms of biological role, catalyzes cis-prenyl chain elongation to produce the polyprenyl backbone of dolichol, a glycosyl carrier-lipid required for the biosynthesis of several classes of glycoprotein. The polypeptide is Dehydrodolichyl diphosphate synthase 7 (Arabidopsis thaliana (Mouse-ear cress)).